A 251-amino-acid chain; its full sequence is Flap endonuclease Xni (251 aa).

A Mg(2+)-binding site is contributed by aspartate 104. The 5'-3' exonuclease domain occupies 160-249 (VQPQQLPDYW…IDGNLQQLRL (90 aa)). K(+) is bound by residues leucine 171, alanine 172, proline 180, valine 182, and isoleucine 185. The tract at residues 184 to 189 (GIGPKS) is interaction with DNA.

This sequence belongs to the Xni family. Mg(2+) serves as cofactor. The cofactor is K(+).

In terms of biological role, has flap endonuclease activity. During DNA replication, flap endonucleases cleave the 5'-overhanging flap structure that is generated by displacement synthesis when DNA polymerase encounters the 5'-end of a downstream Okazaki fragment. The sequence is that of Flap endonuclease Xni from Escherichia coli O139:H28 (strain E24377A / ETEC).